The chain runs to 72 residues: UPF0729 protein C18orf32 homolog (72 aa).

The tract at residues 1-33 (MVCIPCIVIPVLLWIFKKFLEPYIYPVVSRIWP) is necessary for its localzation to the endoplasmic reticulum and lipid droplets. Residues 45–72 (TGKVDCKGADTNGFSTKGPTEVSDKKKD) form a disordered region.

This sequence belongs to the UPF0729 family. In terms of assembly, interacts with DERL1 and AMFR. Post-translationally, undergoes ER-associated degradation (ERAD).

The protein resides in the endoplasmic reticulum. It is found in the lipid droplet. In terms of biological role, may activate the NF-kappa-B signaling pathway. The sequence is that of UPF0729 protein C18orf32 homolog from Rattus norvegicus (Rat).